The primary structure comprises 57 residues: Large ribosomal subunit protein bL32 (57 aa).

A compositionally biased stretch (basic residues) spans 1–19 (MATPKRRMSRANTRSRRAQ). Residues 1–20 (MATPKRRMSRANTRSRRAQW) are disordered.

This sequence belongs to the bacterial ribosomal protein bL32 family.

The polypeptide is Large ribosomal subunit protein bL32 (Mycobacterium leprae (strain Br4923)).